We begin with the raw amino-acid sequence, 309 residues long: Taste receptor type 2 member 20 (309 aa).

At 1–6 (MMSFLH) the chain is on the extracellular side. Residues 7-27 (IVFSILVVVAFILGNFANGFI) traverse the membrane as a helical segment. At 28-46 (ALINFIAWVKRQKISSADQ) the chain is on the cytoplasmic side. The helical transmembrane segment at 47 to 67 (IIAALAVSRVGLLWVILLHWY) threads the bilayer. At 68–79 (STVLNPTSSNLK) the chain is on the extracellular side. The helical transmembrane segment at 80–100 (VIIFISNAWAVTNHFSIWLAT) threads the bilayer. Over 101 to 125 (SLSIFYLLKIVNFSRLIFHHLKRKA) the chain is Cytoplasmic. The helical transmembrane segment at 126–146 (KSVVLVIVLGSLFFLVCHLVM) threads the bilayer. Residues 147 to 178 (KHTYINVWTEECEGNVTWKIKLRNAMHLSNLT) lie on the Extracellular side of the membrane. Asparagine 161 and asparagine 176 each carry an N-linked (GlcNAc...) asparagine glycan. The helical transmembrane segment at 179–199 (VAMLANLIPFTLTLISFLLLI) threads the bilayer. Over 200-229 (YSLCKHLKKMQLHGKGSQDPSTKIHIKALQ) the chain is Cytoplasmic. The chain crosses the membrane as a helical span at residues 230–250 (TVTSFLILLAIYFLCLIISFW). Topologically, residues 251–259 (NFKMRPKEI) are extracellular. Residues 260-280 (VLMLCQAFGIIYPSFHSFILI) traverse the membrane as a helical segment. The Cytoplasmic segment spans residues 281-309 (WGNKTLKQTFLSVLWQVTCWAKGQNQSTP).

Belongs to the G-protein coupled receptor T2R family. As to expression, expressed in subsets of taste receptor cells of the tongue and exclusively in gustducin-positive cells.

It is found in the membrane. In terms of biological role, receptor that may play a role in the perception of bitterness and is gustducin-linked. May play a role in sensing the chemical composition of the gastrointestinal content. The activity of this receptor may stimulate alpha gustducin, mediate PLC-beta-2 activation and lead to the gating of TRPM5. This chain is Taste receptor type 2 member 20 (TAS2R20), found in Homo sapiens (Human).